The following is a 139-amino-acid chain: Sec-independent protein translocase protein TatB (139 aa).

A helical membrane pass occupies residues 1–21 (MFDIGFTELLLVGLVALMVLG). The segment at 69–139 (LDLEREMKQS…PLRSDRPSEP (71 aa)) is disordered. Residues 80-95 (MPPPASNPAATPPSPP) are compositionally biased toward pro residues.

It belongs to the TatB family. The Tat system comprises two distinct complexes: a TatABC complex, containing multiple copies of TatA, TatB and TatC subunits, and a separate TatA complex, containing only TatA subunits. Substrates initially bind to the TatABC complex, which probably triggers association of the separate TatA complex to form the active translocon.

The protein localises to the cell inner membrane. Its function is as follows. Part of the twin-arginine translocation (Tat) system that transports large folded proteins containing a characteristic twin-arginine motif in their signal peptide across membranes. Together with TatC, TatB is part of a receptor directly interacting with Tat signal peptides. TatB may form an oligomeric binding site that transiently accommodates folded Tat precursor proteins before their translocation. This is Sec-independent protein translocase protein TatB from Stutzerimonas stutzeri (strain A1501) (Pseudomonas stutzeri).